The primary structure comprises 123 residues: Protein Wnt-3 (123 aa).

The O-palmitoleoyl serine; by PORCN moiety is linked to residue S1. C89 and C104 are joined by a disulfide. N90 is a glycosylation site (N-linked (GlcNAc...) asparagine).

It belongs to the Wnt family. Palmitoleoylation is required for efficient binding to frizzled receptors. Depalmitoleoylation leads to Wnt signaling pathway inhibition.

The protein resides in the secreted. The protein localises to the extracellular space. Its subcellular location is the extracellular matrix. In terms of biological role, ligand for members of the frizzled family of seven transmembrane receptors. Functions in the canonical Wnt signaling pathway that results in activation of transcription factors of the TCF/LEF family. Required for normal embryonic development. This chain is Protein Wnt-3 (WNT-3), found in Eptatretus stoutii (Pacific hagfish).